Here is a 182-residue protein sequence, read N- to C-terminus: Lipoprotein signal peptidase (182 aa).

4 helical membrane passes run 15-35, 44-64, 65-85, and 97-117; these read IYLG…FLVI, LEVF…FVFG, AFQD…VFLI, and PWGW…KFFV. Residues D140 and D162 contribute to the active site. A helical transmembrane segment spans residues 155-175; sequence WPAFNVADSCVTIGLTILIFT.

Belongs to the peptidase A8 family.

It localises to the cell inner membrane. It carries out the reaction Release of signal peptides from bacterial membrane prolipoproteins. Hydrolyzes -Xaa-Yaa-Zaa-|-(S,diacylglyceryl)Cys-, in which Xaa is hydrophobic (preferably Leu), and Yaa (Ala or Ser) and Zaa (Gly or Ala) have small, neutral side chains.. It participates in protein modification; lipoprotein biosynthesis (signal peptide cleavage). This protein specifically catalyzes the removal of signal peptides from prolipoproteins. The sequence is that of Lipoprotein signal peptidase from Leptospira interrogans serogroup Icterohaemorrhagiae serovar Lai (strain 56601).